The sequence spans 107 residues: Prepilin peptidase-dependent protein C (107 aa).

Positions 1–10 (MSASLKNQQG) are excised as a propeptide. An N-methylphenylalanine modification is found at F11. Residues 11-30 (FSLPEVMLAMVLMVMIVTAL) traverse the membrane as a helical segment.

The protein localises to the membrane. Functionally, not yet known. This chain is Prepilin peptidase-dependent protein C (ppdC), found in Escherichia coli (strain K12).